The following is a 237-amino-acid chain: Ribosomal RNA small subunit methyltransferase G (237 aa).

S-adenosyl-L-methionine is bound by residues Gly78, Phe83, 129 to 130 (AE), and Arg148.

Belongs to the methyltransferase superfamily. RNA methyltransferase RsmG family.

The protein resides in the cytoplasm. Its function is as follows. Specifically methylates the N7 position of a guanine in 16S rRNA. The protein is Ribosomal RNA small subunit methyltransferase G of Streptococcus pyogenes serotype M3 (strain ATCC BAA-595 / MGAS315).